The primary structure comprises 268 residues: Embryonic abundant protein USP92 (268 aa).

The signal sequence occupies residues 1 to 22; it reads MEFAHLTVLSLFCLAFVGITAT. 5 consecutive repeat copies span residues 50-55, 83-88, 101-106, 166-183, and 202-222. The segment at 50–106 is 3 X 6 AA approximate repeats; sequence GKTNSLPIKSEELKQYSTLFFEHDLHPRKNFILGNTNSVGSIIRPFTKSRQGVTDSI. Residues 68-259 form the BURP domain; it reads LFFEHDLHPR…GNKAAAWVPN (192 aa). A 2 X approximate repeats region spans residues 166 to 222; that stretch reads YVVEDVKKVGDNAVMCHRLNFEKVVFNCHQVRETTAYVVSLVASDGTKTKALTVCHH. A glycan (N-linked (GlcNAc...) asparagine) is linked at Asn259.

Seed.

The chain is Embryonic abundant protein USP92 from Vicia faba (Broad bean).